The following is a 441-amino-acid chain: Heat shock factor protein 4 (441 aa).

The DNA-binding element occupies 17 to 121 (NVPAFLTKLW…EHLLEHIKRK (105 aa)). A hydrophobic repeat HR-A/B region spans residues 130–205 (TKVRQEDLSK…QMQSNSPSTV (76 aa)).

It belongs to the HSF family. In terms of tissue distribution, predominantly expressed in the eye.

The protein localises to the nucleus. In terms of biological role, heat-shock transcription factor that specifically binds heat shock promoter elements (HSE). Required for denucleation and organelle rupture and degradation that occur during eye lens terminal differentiation, when fiber cells that compose the lens degrade all membrane-bound organelles in order to provide lens with transparency to allow the passage of light. In this process, may regulate denucleation of lens fiber cells in part by activating dnase1l1l and dnase2b transcription. May be involved in DNA repair through the transcriptional regulation of rad51. May up-regulate TP53 protein in lens fiber cells, possibly through protein stabilization. In the eye lens, controls the expression of alpha-crystallin B chain/CRYAB and consequently may be involved in the regulation of lysosomal acidification. This is Heat shock factor protein 4 from Danio rerio (Zebrafish).